The following is a 425-amino-acid chain: Serine--tRNA ligase (425 aa).

The segment at 41–70 (TERSQLQARSNQVGKQVGEKIKSGSDPKGT) is disordered. Polar residues predominate over residues 44-54 (SQLQARSNQVG). Over residues 57–70 (VGEKIKSGSDPKGT) the composition is skewed to basic and acidic residues. 234-236 (TSE) is a binding site for L-serine. ATP is bound at residue 265-267 (RRE). An L-serine-binding site is contributed by glutamate 288. ATP is bound at residue 352–355 (EISS). An L-serine-binding site is contributed by serine 388.

This sequence belongs to the class-II aminoacyl-tRNA synthetase family. Type-1 seryl-tRNA synthetase subfamily. Homodimer. The tRNA molecule binds across the dimer.

Its subcellular location is the cytoplasm. The enzyme catalyses tRNA(Ser) + L-serine + ATP = L-seryl-tRNA(Ser) + AMP + diphosphate + H(+). The catalysed reaction is tRNA(Sec) + L-serine + ATP = L-seryl-tRNA(Sec) + AMP + diphosphate + H(+). Its pathway is aminoacyl-tRNA biosynthesis; selenocysteinyl-tRNA(Sec) biosynthesis; L-seryl-tRNA(Sec) from L-serine and tRNA(Sec): step 1/1. In terms of biological role, catalyzes the attachment of serine to tRNA(Ser). Is also able to aminoacylate tRNA(Sec) with serine, to form the misacylated tRNA L-seryl-tRNA(Sec), which will be further converted into selenocysteinyl-tRNA(Sec). This Trichodesmium erythraeum (strain IMS101) protein is Serine--tRNA ligase.